Consider the following 425-residue polypeptide: Multifunctional CCA protein (425 aa).

Residues glycine 8 and arginine 11 each coordinate ATP. 2 residues coordinate CTP: glycine 8 and arginine 11. Residues aspartate 21 and aspartate 23 each coordinate Mg(2+). 3 residues coordinate ATP: arginine 91, arginine 141, and arginine 144. 3 residues coordinate CTP: arginine 91, arginine 141, and arginine 144. Positions threonine 230–isoleucine 331 constitute an HD domain.

The protein belongs to the tRNA nucleotidyltransferase/poly(A) polymerase family. Bacterial CCA-adding enzyme type 1 subfamily. In terms of assembly, monomer. Can also form homodimers and oligomers. Requires Mg(2+) as cofactor. Ni(2+) serves as cofactor.

It catalyses the reaction a tRNA precursor + 2 CTP + ATP = a tRNA with a 3' CCA end + 3 diphosphate. The enzyme catalyses a tRNA with a 3' CCA end + 2 CTP + ATP = a tRNA with a 3' CCACCA end + 3 diphosphate. Its function is as follows. Catalyzes the addition and repair of the essential 3'-terminal CCA sequence in tRNAs without using a nucleic acid template. Adds these three nucleotides in the order of C, C, and A to the tRNA nucleotide-73, using CTP and ATP as substrates and producing inorganic pyrophosphate. tRNA 3'-terminal CCA addition is required both for tRNA processing and repair. Also involved in tRNA surveillance by mediating tandem CCA addition to generate a CCACCA at the 3' terminus of unstable tRNAs. While stable tRNAs receive only 3'-terminal CCA, unstable tRNAs are marked with CCACCA and rapidly degraded. The protein is Multifunctional CCA protein of Acidovorax ebreus (strain TPSY) (Diaphorobacter sp. (strain TPSY)).